The primary structure comprises 326 residues: Vitamin B12 import system permease protein BtuC (326 aa).

9 consecutive transmembrane segments (helical) span residues 13-35 (IRWL…CAGE), 55-77 (IRLP…GAVM), 90-107 (LLGV…AVLL), 111-133 (QLPN…LILL), 146-168 (LLAG…YFST), 188-205 (WRQS…LWIC), 242-264 (MVGV…PHIL), 274-296 (VLLP…VARL), and 303-322 (LPIG…WLLL).

Belongs to the binding-protein-dependent transport system permease family. FecCD subfamily. The complex is composed of two ATP-binding proteins (BtuD), two transmembrane proteins (BtuC) and a solute-binding protein (BtuF).

It localises to the cell inner membrane. In terms of biological role, part of the ABC transporter complex BtuCDF involved in vitamin B12 import. Involved in the translocation of the substrate across the membrane. In Shigella flexneri, this protein is Vitamin B12 import system permease protein BtuC.